Reading from the N-terminus, the 216-residue chain is uncharacterized protein (216 aa).

Residues 55 to 216 (NEDKAEAMSN…NEKEKDVNPK (162 aa)) are disordered. Basic and acidic residues-rich tracts occupy residues 134-152 (LTEKPLTDTEPELHPDNHV), 177-187 (KINDKSDDTLH), and 207-216 (NEKEKDVNPK).

This is an uncharacterized protein from Caenorhabditis elegans.